Consider the following 181-residue polypeptide: Translationally-controlled tumor protein homolog (181 aa).

A TCTP domain is found at 1–181; sequence MLIYKDIFTD…VKEAILEEKC (181 aa).

This sequence belongs to the TCTP family.

It localises to the cytoplasm. In terms of biological role, involved in calcium binding and microtubule stabilization. This Caenorhabditis briggsae protein is Translationally-controlled tumor protein homolog (tct-1).